The chain runs to 156 residues: ATP synthase subunit b (156 aa).

Residues Ile3–Thr23 traverse the membrane as a helical segment.

This sequence belongs to the ATPase B chain family. F-type ATPases have 2 components, F(1) - the catalytic core - and F(0) - the membrane proton channel. F(1) has five subunits: alpha(3), beta(3), gamma(1), delta(1), epsilon(1). F(0) has three main subunits: a(1), b(2) and c(10-14). The alpha and beta chains form an alternating ring which encloses part of the gamma chain. F(1) is attached to F(0) by a central stalk formed by the gamma and epsilon chains, while a peripheral stalk is formed by the delta and b chains.

It localises to the cell inner membrane. Functionally, f(1)F(0) ATP synthase produces ATP from ADP in the presence of a proton or sodium gradient. F-type ATPases consist of two structural domains, F(1) containing the extramembraneous catalytic core and F(0) containing the membrane proton channel, linked together by a central stalk and a peripheral stalk. During catalysis, ATP synthesis in the catalytic domain of F(1) is coupled via a rotary mechanism of the central stalk subunits to proton translocation. In terms of biological role, component of the F(0) channel, it forms part of the peripheral stalk, linking F(1) to F(0). This is ATP synthase subunit b from Xylella fastidiosa (strain 9a5c).